The chain runs to 140 residues: Large ribosomal subunit protein uL16c (140 aa).

It belongs to the universal ribosomal protein uL16 family. Part of the 50S ribosomal subunit.

It localises to the plastid. It is found in the chloroplast. The protein is Large ribosomal subunit protein uL16c of Psilotum nudum (Whisk fern).